Here is a 253-residue protein sequence, read N- to C-terminus: Ubiquinone biosynthesis O-methyltransferase (253 aa).

Arg47, Gly78, Asp99, and Met141 together coordinate S-adenosyl-L-methionine.

The protein belongs to the methyltransferase superfamily. UbiG/COQ3 family.

The enzyme catalyses a 3-demethylubiquinol + S-adenosyl-L-methionine = a ubiquinol + S-adenosyl-L-homocysteine + H(+). It carries out the reaction a 3-(all-trans-polyprenyl)benzene-1,2-diol + S-adenosyl-L-methionine = a 2-methoxy-6-(all-trans-polyprenyl)phenol + S-adenosyl-L-homocysteine + H(+). It functions in the pathway cofactor biosynthesis; ubiquinone biosynthesis. O-methyltransferase that catalyzes the 2 O-methylation steps in the ubiquinone biosynthetic pathway. In Rhodopseudomonas palustris (strain BisA53), this protein is Ubiquinone biosynthesis O-methyltransferase.